The sequence spans 390 residues: NADH-quinone oxidoreductase subunit D (390 aa).

It belongs to the complex I 49 kDa subunit family. In terms of assembly, NDH-1 is composed of 14 different subunits. Subunits NuoB, C, D, E, F, and G constitute the peripheral sector of the complex.

It localises to the cell membrane. It carries out the reaction a quinone + NADH + 5 H(+)(in) = a quinol + NAD(+) + 4 H(+)(out). In terms of biological role, NDH-1 shuttles electrons from NADH, via FMN and iron-sulfur (Fe-S) centers, to quinones in the respiratory chain. The immediate electron acceptor for the enzyme in this species is believed to be ubiquinone. Couples the redox reaction to proton translocation (for every two electrons transferred, four hydrogen ions are translocated across the cytoplasmic membrane), and thus conserves the redox energy in a proton gradient. This chain is NADH-quinone oxidoreductase subunit D, found in Wolbachia pipientis subsp. Culex pipiens (strain wPip).